We begin with the raw amino-acid sequence, 269 residues long: MILETIGQLLIKVREENPLVHNITNVVVTNFTANGLLALGASPVMAYAKQEVADMAKIAGALVLNIGTLNEHEIEAMLIAGKSANQHGVPVLFDPVGAGATSYRTETSQRLAQELDLAFIRGNAAEVANVIGERWEIKGVDAKEAGGDVEDLARAAAKKLRTIVAITGKVDVISDGEKTYSIHNGHPILTKVTGTGCLLTSVMGAFAAIAKDKLIAGAAALVCYGVAAQLAAEKAAEVGPGSFQIEFLNALHNLTAEDVRRLGYIEKRE.

Methionine 45 is a binding site for substrate. ATP is bound by residues arginine 121 and threonine 167. Glycine 194 contributes to the substrate binding site.

The protein belongs to the Thz kinase family. The cofactor is Mg(2+).

It carries out the reaction 5-(2-hydroxyethyl)-4-methylthiazole + ATP = 4-methyl-5-(2-phosphooxyethyl)-thiazole + ADP + H(+). Its pathway is cofactor biosynthesis; thiamine diphosphate biosynthesis; 4-methyl-5-(2-phosphoethyl)-thiazole from 5-(2-hydroxyethyl)-4-methylthiazole: step 1/1. Catalyzes the phosphorylation of the hydroxyl group of 4-methyl-5-beta-hydroxyethylthiazole (THZ). The protein is Hydroxyethylthiazole kinase of Brevibacillus brevis (strain 47 / JCM 6285 / NBRC 100599).